The primary structure comprises 648 residues: Probable alpha-galactosidase D (648 aa).

The N-terminal stretch at M1–A16 is a signal peptide. N-linked (GlcNAc...) asparagine glycans are attached at residues N84 and N90. C123 and C156 are disulfide-bonded. D154 acts as the Nucleophile in catalysis. E199–D203 serves as a coordination point for substrate. The active-site Proton donor is D221. N-linked (GlcNAc...) asparagine glycans are attached at residues N339, N350, N505, and N572.

The protein belongs to the glycosyl hydrolase 27 family.

The protein resides in the secreted. It catalyses the reaction Hydrolysis of terminal, non-reducing alpha-D-galactose residues in alpha-D-galactosides, including galactose oligosaccharides, galactomannans and galactolipids.. Functionally, hydrolyzes a variety of simple alpha-D-galactoside as well as more complex molecules such as oligosaccharides and polysaccharides. The sequence is that of Probable alpha-galactosidase D (aglD) from Aspergillus fumigatus (strain CBS 144.89 / FGSC A1163 / CEA10) (Neosartorya fumigata).